The following is a 280-amino-acid chain: Acetylglutamate kinase (280 aa).

Residues 64–65 (GG), Arg-86, and Asn-179 contribute to the substrate site.

This sequence belongs to the acetylglutamate kinase family. ArgB subfamily.

It is found in the cytoplasm. The catalysed reaction is N-acetyl-L-glutamate + ATP = N-acetyl-L-glutamyl 5-phosphate + ADP. The protein operates within amino-acid biosynthesis; L-arginine biosynthesis; N(2)-acetyl-L-ornithine from L-glutamate: step 2/4. Catalyzes the ATP-dependent phosphorylation of N-acetyl-L-glutamate. The sequence is that of Acetylglutamate kinase from Campylobacter fetus subsp. fetus (strain 82-40).